The primary structure comprises 487 residues: Serine/threonine-protein kinase 4 (487 aa).

Residue methionine 1 is modified to N-acetylmethionine. Threonine 3 is subject to Phosphothreonine. The Protein kinase domain maps to phenylalanine 30 to valine 281. Residues leucine 36–valine 44 and lysine 59 contribute to the ATP site. The Proton acceptor role is filled by aspartate 149. Threonine 183 carries the post-translational modification Phosphothreonine; by autocatalysis. A Phosphoserine modification is found at serine 265. A coiled-coil region spans residues leucine 290–arginine 310. A compositionally biased stretch (basic and acidic residues) spans lysine 303 to valine 312. Residues lysine 303 to arginine 332 are disordered. Residues aspartate 313–aspartate 326 are compositionally biased toward acidic residues. Serine 320 bears the Phosphoserine mark. A phosphothreonine mark is found at threonine 340 and threonine 367. Threonine 387 bears the Phosphothreonine; by PKB/AKT1 mark. Residues serine 410 and serine 414 each carry the phosphoserine modification. Tyrosine 433 carries the phosphotyrosine modification. The 48-residue stretch at tyrosine 433–lysine 480 folds into the SARAH domain.

This sequence belongs to the protein kinase superfamily. STE Ser/Thr protein kinase family. STE20 subfamily. In terms of assembly, homodimer; mediated via the coiled-coil region. Interacts with NORE1, which inhibits autoactivation. Interacts with and stabilizes SAV1. Interacts with RASSF1. Interacts with FOXO3. Interacts with RASSF2 (via SARAH domain). Interacts with AR, PKB/AKT1, TNNI3 and SIRT1. Interacts with DLG5 (via PDZ domain 3). Interacts with MARK3 and SCRIB in the presence of DLG5. Mg(2+) is required as a cofactor. Autophosphorylated on serine and threonine residues. Phosphorylation at Thr-387 by PKB/AKT1, leads to inhibition of its: kinase activity, nuclear translocation and autophosphorylation at Thr-183. It also diminishes its cleavage by caspases and its ability to phosphorylate FOXO3. Post-translationally, proteolytically cleaved by caspase-3 during apoptosis at Asp-326 and Asp-349 resulting in a 37 kDa or a 39 kDa subunit respectively. The 39 kDa subunit is further cleaved into the 37 kDa form. Proteolytic cleavage results in kinase activation and nuclear translocation of the truncated form (MST1/N). It is less likely that cleavage at Asp-349 is a prerequisite for activation as this site is not conserved in the murine ortholog.

It localises to the cytoplasm. The protein localises to the nucleus. It catalyses the reaction L-seryl-[protein] + ATP = O-phospho-L-seryl-[protein] + ADP + H(+). The catalysed reaction is L-threonyl-[protein] + ATP = O-phospho-L-threonyl-[protein] + ADP + H(+). Its activity is regulated as follows. Inhibited by the C-terminal non-catalytic region. Activated by caspase-cleavage. Full activation also requires homodimerization and autophosphorylation of Thr-183. Activated by RASSF1 which acts by preventing its dephosphorylation. Functionally, stress-activated, pro-apoptotic kinase which, following caspase-cleavage, enters the nucleus and induces chromatin condensation followed by internucleosomal DNA fragmentation. Key component of the Hippo signaling pathway which plays a pivotal role in organ size control and tumor suppression by restricting proliferation and promoting apoptosis. The core of this pathway is composed of a kinase cascade wherein STK3/MST2 and STK4/MST1, in complex with its regulatory protein SAV1, phosphorylates and activates LATS1/2 in complex with its regulatory protein MOB1, which in turn phosphorylates and inactivates YAP1 oncoprotein and WWTR1/TAZ. Phosphorylation of YAP1 by LATS2 inhibits its translocation into the nucleus to regulate cellular genes important for cell proliferation, cell death, and cell migration. STK3/MST2 and STK4/MST1 are required to repress proliferation of mature hepatocytes, to prevent activation of facultative adult liver stem cells (oval cells), and to inhibit tumor formation. Phosphorylates 'Ser-14' of histone H2B (H2BS14ph) during apoptosis. Phosphorylates FOXO3 upon oxidative stress, which results in its nuclear translocation and cell death initiation. Phosphorylates MOBKL1A, MOBKL1B and RASSF2. Phosphorylates TNNI3 (cardiac Tn-I) and alters its binding affinity to TNNC1 (cardiac Tn-C) and TNNT2 (cardiac Tn-T). Phosphorylates FOXO1 on 'Ser-212' and regulates its activation and stimulates transcription of PMAIP1 in a FOXO1-dependent manner. Phosphorylates SIRT1 and inhibits SIRT1-mediated p53/TP53 deacetylation, thereby promoting p53/TP53 dependent transcription and apoptosis upon DNA damage. Acts as an inhibitor of PKB/AKT1. Phosphorylates AR on 'Ser-650' and suppresses its activity by intersecting with PKB/AKT1 signaling and antagonizing formation of AR-chromatin complexes. The protein is Serine/threonine-protein kinase 4 (STK4) of Colobus guereza (Mantled guereza).